Consider the following 68-residue polypeptide: Bifunctional protein GlmU (68 aa).

UDP-N-acetyl-alpha-D-glucosamine contacts are provided by residues 9–12 (LAAG) and lysine 23.

It in the N-terminal section; belongs to the N-acetylglucosamine-1-phosphate uridyltransferase family. In the C-terminal section; belongs to the transferase hexapeptide repeat family. In terms of assembly, homotrimer. The cofactor is Mg(2+).

The protein localises to the cytoplasm. It catalyses the reaction alpha-D-glucosamine 1-phosphate + acetyl-CoA = N-acetyl-alpha-D-glucosamine 1-phosphate + CoA + H(+). The catalysed reaction is N-acetyl-alpha-D-glucosamine 1-phosphate + UTP + H(+) = UDP-N-acetyl-alpha-D-glucosamine + diphosphate. The protein operates within nucleotide-sugar biosynthesis; UDP-N-acetyl-alpha-D-glucosamine biosynthesis; N-acetyl-alpha-D-glucosamine 1-phosphate from alpha-D-glucosamine 6-phosphate (route II): step 2/2. It functions in the pathway nucleotide-sugar biosynthesis; UDP-N-acetyl-alpha-D-glucosamine biosynthesis; UDP-N-acetyl-alpha-D-glucosamine from N-acetyl-alpha-D-glucosamine 1-phosphate: step 1/1. Its pathway is bacterial outer membrane biogenesis; LPS lipid A biosynthesis. Functionally, catalyzes the last two sequential reactions in the de novo biosynthetic pathway for UDP-N-acetylglucosamine (UDP-GlcNAc). The C-terminal domain catalyzes the transfer of acetyl group from acetyl coenzyme A to glucosamine-1-phosphate (GlcN-1-P) to produce N-acetylglucosamine-1-phosphate (GlcNAc-1-P), which is converted into UDP-GlcNAc by the transfer of uridine 5-monophosphate (from uridine 5-triphosphate), a reaction catalyzed by the N-terminal domain. The sequence is that of Bifunctional protein GlmU (glmU) from Priestia megaterium (Bacillus megaterium).